A 141-amino-acid chain; its full sequence is ATP synthase epsilon chain (141 aa).

Belongs to the ATPase epsilon chain family. In terms of assembly, F-type ATPases have 2 components, CF(1) - the catalytic core - and CF(0) - the membrane proton channel. CF(1) has five subunits: alpha(3), beta(3), gamma(1), delta(1), epsilon(1). CF(0) has three main subunits: a, b and c.

It is found in the cell membrane. In terms of biological role, produces ATP from ADP in the presence of a proton gradient across the membrane. In Natranaerobius thermophilus (strain ATCC BAA-1301 / DSM 18059 / JW/NM-WN-LF), this protein is ATP synthase epsilon chain.